A 431-amino-acid polypeptide reads, in one-letter code: 3-deoxy-D-manno-octulosonic acid transferase (431 aa).

Residues 5–27 (WLTSRLYDAFLVCAFFVSAPRIF) traverse the membrane as a helical; Signal-anchor segment. The Proton acceptor role is filled by glutamate 67. CMP contacts are provided by residues 275-276 (PR), 315-317 (MGV), and 342-345 (NLLE).

Belongs to the glycosyltransferase group 1 family. Glycosyltransferase 30 subfamily.

It localises to the cell inner membrane. The catalysed reaction is lipid IVA (E. coli) + CMP-3-deoxy-beta-D-manno-octulosonate = alpha-Kdo-(2-&gt;6)-lipid IVA (E. coli) + CMP + H(+). It catalyses the reaction alpha-Kdo-(2-&gt;6)-lipid IVA (E. coli) + CMP-3-deoxy-beta-D-manno-octulosonate = alpha-Kdo-(2-&gt;4)-alpha-Kdo-(2-&gt;6)-lipid IVA (E. coli) + CMP + H(+). It carries out the reaction alpha-Kdo-(2-&gt;4)-alpha-Kdo-(2-&gt;6)-lipid IVA (E. coli) + CMP-3-deoxy-beta-D-manno-octulosonate = alpha-Kdo-(2-&gt;8)-alpha-Kdo-(2-&gt;4)-alpha-Kdo-(2-&gt;6)-lipid IVA (E. coli) + CMP + H(+). It functions in the pathway bacterial outer membrane biogenesis; LPS core biosynthesis. Involved in lipopolysaccharide (LPS) biosynthesis. Catalyzes the transfer of three 3-deoxy-D-manno-octulosonate (Kdo) residues from CMP-Kdo to lipid IV(A), the tetraacyldisaccharide-1,4'-bisphosphate precursor of lipid A. Thus generates the genus-specific LPS epitope of Chlamydia, composed of the trisaccharide alpha-Kdo-(2-&gt;8)-alpha-Kdo-(2-&gt;4)-alpha-Kdo. This Chlamydia trachomatis serovar A (strain ATCC VR-571B / DSM 19440 / HAR-13) protein is 3-deoxy-D-manno-octulosonic acid transferase (waaA).